Reading from the N-terminus, the 1345-residue chain is Aldehyde oxidase 2 (1345 aa).

One can recognise a 2Fe-2S ferredoxin-type domain in the interval 9 to 96 (DELEFFVNGK…GAAVTTVEGV (88 aa)). [2Fe-2S] cluster-binding residues include Cys48, Cys53, Cys56, and Cys78. Position 117 (Gln117) interacts with Mo-molybdopterin. [2Fe-2S] cluster-binding residues include Cys118, Cys121, Cys153, and Cys155. Cys155 provides a ligand contact to Mo-molybdopterin. Residues 238–423 (FYGERITWIA…GSVYIPHSQK (186 aa)) form the FAD-binding PCMH-type domain. FAD is bound by residues 266–273 (LISGNTAL), Ala347, Ser356, His360, Asp369, and Leu413. Mo-molybdopterin is bound by residues 812–813 (GF), 1094–1097 (ASVG), Gln1209, and Leu1274. Glu1276 acts as the Proton acceptor; for azaheterocycle hydroxylase activity in catalysis.

This sequence belongs to the xanthine dehydrogenase family. In terms of assembly, homodimer. It depends on [2Fe-2S] cluster as a cofactor. The cofactor is FAD. Mo-molybdopterin is required as a cofactor.

Its subcellular location is the cytoplasm. The enzyme catalyses an aldehyde + O2 + H2O = a carboxylate + H2O2 + H(+). Oxidase with broad substrate specificity, oxidizing aromatic azaheterocycles, such as phthalazine, as well as aldehydes, such as benzaldehyde and retinal. The sequence is that of Aldehyde oxidase 2 (Aox2) from Rattus norvegicus (Rat).